Reading from the N-terminus, the 312-residue chain is Olfactory receptor 6C2 (312 aa).

Residues 1–23 lie on the Extracellular side of the membrane; that stretch reads MKNHTVIRTFILLGLTGDPHLQV. Residue Asn3 is glycosylated (N-linked (GlcNAc...) asparagine). A helical membrane pass occupies residues 24–44; it reads LLFIFLFLTYMLSVTGNLTII. Residues 45 to 52 are Cytoplasmic-facing; sequence TLTLVDHH. The chain crosses the membrane as a helical span at residues 53–73; the sequence is LKTPMYFFLRNFSFLEVSFTT. At 74–97 the chain is on the extracellular side; it reads VCIPRFLYNISMGDNTITYNACAS. A glycan (N-linked (GlcNAc...) asparagine) is linked at Asn82. A disulfide bond links Cys95 and Cys187. Residues 98–118 form a helical membrane-spanning segment; it reads QIFFVILFGATEFFLLAAMSY. Residues 119–137 lie on the Cytoplasmic side of the membrane; that stretch reads DRYVAICKPLHYVVIMNNR. The chain crosses the membrane as a helical span at residues 138–158; that stretch reads VCTLLVLCCWVAGLMIIVPPL. At 159–195 the chain is on the extracellular side; it reads SLGLQLEFCDSNAIDHFSCDAGPLLKISCSDTWVIEQ. A helical membrane pass occupies residues 196 to 215; sequence MVILMAVFALIITLVCVILS. The Cytoplasmic portion of the chain corresponds to 216–235; that stretch reads YLYIVRTILKFPSVQQRKKA. Residues 236–256 form a helical membrane-spanning segment; sequence FSTCSSHMIVVSIAYGSCIFI. Over 257–269 the chain is Extracellular; that stretch reads YIKPSAKDEVAIN. Residues 270–290 form a helical membrane-spanning segment; the sequence is KGVSVLTTSVAPLLNPFIYTL. Residues 291-312 are Cytoplasmic-facing; it reads RNKQVKQAFSDSIKRIAFLSKK.

It belongs to the G-protein coupled receptor 1 family.

Its subcellular location is the cell membrane. In terms of biological role, odorant receptor. This Homo sapiens (Human) protein is Olfactory receptor 6C2 (OR6C2).